The primary structure comprises 299 residues: Coenzyme PQQ synthesis protein B (299 aa).

It belongs to the PqqB family.

It functions in the pathway cofactor biosynthesis; pyrroloquinoline quinone biosynthesis. Its function is as follows. May be involved in the transport of PQQ or its precursor to the periplasm. The sequence is that of Coenzyme PQQ synthesis protein B from Methylorubrum extorquens (strain CM4 / NCIMB 13688) (Methylobacterium extorquens).